The primary structure comprises 993 residues: Testis-expressed protein 13C (993 aa).

Disordered stretches follow at residues 281–381, 520–547, and 894–959; these read QEET…SLKK, DSKSHRMKKDPVMPQKMVPLGDSRSHSL, and FSKS…PVNW. Positions 325-335 are enriched in polar residues; sequence GMTSQGDSSSH. Over residues 353–364 the composition is skewed to basic and acidic residues; it reads SRSHSLEKKPVM. Polar residues predominate over residues 944–957; sequence ESQQQKPASCSSPV. The RanBP2-type zinc finger occupies 955-984; the sequence is SPVNWACPWCNAMNFPRNKVCSKCKRVRMP.

The protein belongs to the TEX13 family.

The polypeptide is Testis-expressed protein 13C (Homo sapiens (Human)).